The following is a 227-amino-acid chain: Cytochrome c oxidase subunit 2 (227 aa).

The Mitochondrial intermembrane portion of the chain corresponds to 1 to 14 (MAYPMQLGLQDATS). A helical membrane pass occupies residues 15-45 (PIMEELMNFHDHTLMIVFLISSLVLYLISLM). Topologically, residues 46–59 (LTTKLIHTNTMDAQ) are mitochondrial matrix. Residues 60-87 (EVETIWTILPAIILVLIALPSLRILYMM) traverse the membrane as a helical segment. Over 88 to 227 (DEINNPVLTV…FFENWSSSMT (140 aa)) the chain is Mitochondrial intermembrane. Positions 161, 196, 198, 200, 204, and 207 each coordinate Cu cation. Mg(2+) is bound at residue glutamate 198.

Belongs to the cytochrome c oxidase subunit 2 family. Component of the cytochrome c oxidase (complex IV, CIV), a multisubunit enzyme composed of 14 subunits. The complex is composed of a catalytic core of 3 subunits MT-CO1, MT-CO2 and MT-CO3, encoded in the mitochondrial DNA, and 11 supernumerary subunits COX4I, COX5A, COX5B, COX6A, COX6B, COX6C, COX7A, COX7B, COX7C, COX8 and NDUFA4, which are encoded in the nuclear genome. The complex exists as a monomer or a dimer and forms supercomplexes (SCs) in the inner mitochondrial membrane with NADH-ubiquinone oxidoreductase (complex I, CI) and ubiquinol-cytochrome c oxidoreductase (cytochrome b-c1 complex, complex III, CIII), resulting in different assemblies (supercomplex SCI(1)III(2)IV(1) and megacomplex MCI(2)III(2)IV(2)). Found in a complex with TMEM177, COA6, COX18, COX20, SCO1 and SCO2. Interacts with TMEM177 in a COX20-dependent manner. Interacts with COX20. Interacts with COX16. It depends on Cu cation as a cofactor.

It is found in the mitochondrion inner membrane. The catalysed reaction is 4 Fe(II)-[cytochrome c] + O2 + 8 H(+)(in) = 4 Fe(III)-[cytochrome c] + 2 H2O + 4 H(+)(out). In terms of biological role, component of the cytochrome c oxidase, the last enzyme in the mitochondrial electron transport chain which drives oxidative phosphorylation. The respiratory chain contains 3 multisubunit complexes succinate dehydrogenase (complex II, CII), ubiquinol-cytochrome c oxidoreductase (cytochrome b-c1 complex, complex III, CIII) and cytochrome c oxidase (complex IV, CIV), that cooperate to transfer electrons derived from NADH and succinate to molecular oxygen, creating an electrochemical gradient over the inner membrane that drives transmembrane transport and the ATP synthase. Cytochrome c oxidase is the component of the respiratory chain that catalyzes the reduction of oxygen to water. Electrons originating from reduced cytochrome c in the intermembrane space (IMS) are transferred via the dinuclear copper A center (CU(A)) of subunit 2 and heme A of subunit 1 to the active site in subunit 1, a binuclear center (BNC) formed by heme A3 and copper B (CU(B)). The BNC reduces molecular oxygen to 2 water molecules using 4 electrons from cytochrome c in the IMS and 4 protons from the mitochondrial matrix. This Desmodillus auricularis (Cape short-eared gerbil) protein is Cytochrome c oxidase subunit 2 (MT-CO2).